A 253-amino-acid chain; its full sequence is Serine/threonine-protein phosphatase 3 (253 aa).

Mn(2+) is required as a cofactor. In terms of processing, phosphorylated by YegI.

The catalysed reaction is O-phospho-L-seryl-[protein] + H2O = L-seryl-[protein] + phosphate. It catalyses the reaction O-phospho-L-threonyl-[protein] + H2O = L-threonyl-[protein] + phosphate. Its activity is regulated as follows. Activity dramatically decreases in the presence of the general protein phosphatase inhibitor sodium phosphate. Slightly inhibited by sodium fluoride. Activity decreases in the presence of the metal chelator EDTA. In terms of biological role, PP2C-like phosphatase that can dephosphorylate YegI. In vitro, can hydrolyze p-nitrophenyl phosphate (pNPP) to p-nitrophenol. The polypeptide is Serine/threonine-protein phosphatase 3 (Escherichia coli (strain K12)).